A 495-amino-acid chain; its full sequence is Neuronal acetylcholine receptor subunit alpha-3 (495 aa).

The first 21 residues, 1-21, serve as a signal peptide directing secretion; that stretch reads MARRSRLRRLLLLLLLPVAST. Residues 22-240 lie on the Extracellular side of the membrane; the sequence is SDAEHRLFER…PLFYTINLII (219 aa). 2 N-linked (GlcNAc...) asparagine glycosylation sites follow: asparagine 45 and asparagine 162. 2 disulfides stabilise this stretch: cysteine 149/cysteine 163 and cysteine 213/cysteine 214. The helical transmembrane segment at 241-256 threads the bilayer; it reads PCLLISFLTVLVFYLP. At 257 to 258 the chain is on the cytoplasmic side; the sequence is SD. The chain crosses the membrane as a helical span at residues 259–275; it reads CGEKVTLCISVLLSLTV. Glutamate 261 provides a ligand contact to Na(+). Residues 276–297 lie on the Extracellular side of the membrane; that stretch reads FLLVITETIPSTSLVIPLIGEY. Residues 298–316 traverse the membrane as a helical segment; that stretch reads LLFTMIFVTLSIVITVFVL. Over 317 to 464 the chain is Cytoplasmic; sequence NVHYRTPTTH…QDDWKYVAMV (148 aa). Phosphoserine occurs at positions 403 and 406. The chain crosses the membrane as a helical span at residues 465-483; the sequence is IDRIFLWVFILVCILGTAG. Residues 484 to 495 lie on the Extracellular side of the membrane; that stretch reads LFLQPLMTRDDA.

The protein belongs to the ligand-gated ion channel (TC 1.A.9) family. Acetylcholine receptor (TC 1.A.9.1) subfamily. Alpha-3/CHRNA3 sub-subfamily. As to quaternary structure, neuronal AChR is composed of two different types of subunits: alpha and beta. CHRNA3/Alpha-3 subunit can be combined to CHRNB2/beta-2 or CHRNB4/beta-4 to give rise to functional receptors. Part of a complex composed of STUB1/CHIP, VCP/p97, CHRNA3, and UBXN2A that modulates the ubiquitination and endoplasmic reticulum-associated degradation (ERAD) of CHRNA3. Within the complex UBXN2A acts as a scaffold protein required for the interaction of CHRNA3 with VCP/p97, this interaction also inhibits CHRNA3 ubiquitination by STUB1/CHIP and subsequently ERAD. Interacts with UBXN2A (via SEP domain), the interaction is required for the interaction of CHRNA3 in the STUB1:VCP:UBXN2A complex. Interacts with RIC3; which is required for proper folding and assembly. Interacts with LYPD6. In terms of processing, ubiquitinated; by STUB1/CHIP and thereafter degraded by the 26S proteosome complex.

It is found in the synaptic cell membrane. It localises to the cell membrane. The protein resides in the endoplasmic reticulum. Its subcellular location is the golgi apparatus. It carries out the reaction K(+)(in) = K(+)(out). It catalyses the reaction Na(+)(in) = Na(+)(out). The enzyme catalyses Ca(2+)(in) = Ca(2+)(out). Activated by a myriad of ligands such as acetylcholine, cytisine, nicotine, choline and epibatidine. The heteropentamer CHRNA3:CHRNB2 activity is blocked by alpha-conotoxins ImI, ImII, PnIA, GID and MII. The heteropentamer CHRNA3:CHRNB4 activity is blocked by the alpha-conotoxin ImI and AuIB. In terms of biological role, component of neuronal acetylcholine receptors (nAChRs) that function as pentameric, ligand-gated cation channels with high calcium permeability among other activities. nAChRs are excitatory neurotrasnmitter receptors formed by a collection of nAChR subunits known to mediate synaptic transmission in the nervous system and the neuromuscular junction. Each nAchR subunit confers differential attributes to channel properties, including activation, deactivation and desensitization kinetics, pH sensitivity, cation permeability, and binding to allosteric modulators. CHRNA3 forms heteropentameric neuronal acetylcholine receptors with CHRNB2 and CHRNB4. CHRNA3:CHRNB4 being predominant in neurons of the autonomic ganglia, it is known as ganglionic nicotinic receptor. CHRNA3:CHRNB4 also plays an important role in the habenulo-interpeduncular tract, modulating the mesolimbic dopamine system and affecting reward circuits and addiction. Hypothalamic CHRNA3:CHRNB4 nAChR activation by nicotine leads to activation of POMC neurons and a decrease in food intake. Also expressed in the urothelium where it modulates reflex bladder activity by increasing intracellular calcium through extracellular influx and basal ATP release. This chain is Neuronal acetylcholine receptor subunit alpha-3 (CHRNA3), found in Bos taurus (Bovine).